A 482-amino-acid polypeptide reads, in one-letter code: Glutamate--tRNA ligase (482 aa).

A 'HIGH' region motif is present at residues 9–19; sequence PSPTGYLHIGG. The 'KMSKS' region signature appears at 252-256; it reads KLSKR. Residue Lys-255 participates in ATP binding.

This sequence belongs to the class-I aminoacyl-tRNA synthetase family. Glutamate--tRNA ligase type 1 subfamily. As to quaternary structure, monomer.

Its subcellular location is the cytoplasm. The enzyme catalyses tRNA(Glu) + L-glutamate + ATP = L-glutamyl-tRNA(Glu) + AMP + diphosphate. Catalyzes the attachment of glutamate to tRNA(Glu) in a two-step reaction: glutamate is first activated by ATP to form Glu-AMP and then transferred to the acceptor end of tRNA(Glu). This chain is Glutamate--tRNA ligase, found in Ureaplasma urealyticum serovar 10 (strain ATCC 33699 / Western).